The following is a 481-amino-acid chain: Aspartyl/glutamyl-tRNA(Asn/Gln) amidotransferase subunit B (481 aa).

Belongs to the GatB/GatE family. GatB subfamily. As to quaternary structure, heterotrimer of A, B and C subunits.

The catalysed reaction is L-glutamyl-tRNA(Gln) + L-glutamine + ATP + H2O = L-glutaminyl-tRNA(Gln) + L-glutamate + ADP + phosphate + H(+). It catalyses the reaction L-aspartyl-tRNA(Asn) + L-glutamine + ATP + H2O = L-asparaginyl-tRNA(Asn) + L-glutamate + ADP + phosphate + 2 H(+). Allows the formation of correctly charged Asn-tRNA(Asn) or Gln-tRNA(Gln) through the transamidation of misacylated Asp-tRNA(Asn) or Glu-tRNA(Gln) in organisms which lack either or both of asparaginyl-tRNA or glutaminyl-tRNA synthetases. The reaction takes place in the presence of glutamine and ATP through an activated phospho-Asp-tRNA(Asn) or phospho-Glu-tRNA(Gln). The sequence is that of Aspartyl/glutamyl-tRNA(Asn/Gln) amidotransferase subunit B from Pseudomonas syringae pv. syringae (strain B728a).